The following is a 489-amino-acid chain: Coronin-1B (489 aa).

Ser2 carries the post-translational modification Phosphoserine. 5 WD repeats span residues 80 to 120 (GHTG…LTSP), 130 to 170 (GHTK…ELYR), 174 to 213 (LHPDLIYNVSWNRNGSLFCSACKDKSVRIIDPRQGTLVAE), 217 to 260 (AHEG…EPMA), and 265 to 305 (DSSN…PYIH). Residues 414–443 (DSRPAMAPGSSRLGAPASTTAAADATPSGS) form a disordered region. The segment covering 427 to 443 (GAPASTTAAADATPSGS) has biased composition (low complexity). Residues 449–474 (EAGKLEEVMQELRALRALVKEQGERI) adopt a coiled-coil conformation.

Belongs to the WD repeat coronin family. As to quaternary structure, forms homooligomers, but does not form complexes with the other coronins. Interacts with Arp2/3 complex components, including ACTR2, ARPC1B and ARPC2. Binds actin. Phosphorylation on Ser-2 regulates the interaction with the Arp2/3 complex and cell motility in fibroblasts. Phosphorylation does not seem to affect subcellular location.

The protein localises to the cytoplasm. Its subcellular location is the cytoskeleton. The protein resides in the stress fiber. In terms of biological role, regulates leading edge dynamics and cell motility in fibroblasts. May be involved in cytokinesis and signal transduction. This Pongo abelii (Sumatran orangutan) protein is Coronin-1B (CORO1B).